We begin with the raw amino-acid sequence, 66 residues long: Large ribosomal subunit protein bL35 (66 aa).

Basic residues predominate over residues 1-26 (MPKMKTHRGSAKRFKKTASGKLKRGH). Residues 1–28 (MPKMKTHRGSAKRFKKTASGKLKRGHAY) are disordered.

It belongs to the bacterial ribosomal protein bL35 family.

This chain is Large ribosomal subunit protein bL35, found in Geobacillus thermodenitrificans (strain NG80-2).